Here is an 89-residue protein sequence, read N- to C-terminus: Rho beta-crystallin (89 aa).

Substrate is bound at residue His-31.

This sequence belongs to the aldo/keto reductase family. Monomer.

This Lepidodactylus lugubris (Mourning gecko) protein is Rho beta-crystallin.